A 508-amino-acid polypeptide reads, in one-letter code: Protein DETOXIFICATION 52 (508 aa).

12 helical membrane-spanning segments follow: residues 48 to 68 (ILAA…LGHI), 78 to 98 (LAIA…ALGM), 122 to 142 (VLFL…LGKI), 156 to 176 (AQTY…LHPL), 189 to 209 (LTLA…FLVS), 222 to 242 (AAAS…IAGL), 270 to 290 (IGVC…GLLI), 300 to 320 (GILI…GLAV), 341 to 361 (IVAV…AWGV), 368 to 388 (IFTN…ILGL), 415 to 437 (INLG…WAAY), and 441 to 463 (GLWV…VVAT).

The protein belongs to the multi antimicrobial extrusion (MATE) (TC 2.A.66.1) family. In terms of tissue distribution, detected in the part of the veins in cotyledons of 6-day-old seedlings and the basal parts of the petioles in older plants. Highly expressed in the vascular tissues of hypocotyl in dark-grown seedlings.

The protein resides in the late endosome membrane. In terms of biological role, may act as a negative regulator of hypocotyl cell elongation in the light. The chain is Protein DETOXIFICATION 52 from Arabidopsis thaliana (Mouse-ear cress).